A 431-amino-acid chain; its full sequence is MVNIIVVGLQWGDEGKGKVVDWLSTNADAVVRFQGGNNAGHTIVVNDNVYKLNLLPSSVLQNGKLSIIGNGVVLDPYALISEIENLKSNGINITSQNFAISESCPLVLSVHKQADMLFEQLRQDTIGTTNKGIGPCYADKISRRAIRVCDLFDPKDLLHNKVNHLLSYHNLLRKNINNPSIETENIVNELLSIAPKILPFVQPVWKTIHNLIEQNKTIIFEGAQGTFLDIDHGTYPFVTSSNTIAQQAFIGCGINPSNKTHILGLVKAYTTRVGNGPFFTEQNNNIGKTMFESGKELGTVSNRQRRCGWFDAVLARQAVILSGVSGLVMTKLDVLDQFSEIKICVKYKYENKIYDYLPASPYIQSKLEPVYETLPGWQTSTFGSVSYKDLPQNAISYIKKIEEILKVPIYLISTGPERNSMIIINNDFLYK.

Residues 12 to 18 (GDEGKGK) and 40 to 42 (GHT) each bind GTP. The active-site Proton acceptor is D13. Mg(2+)-binding residues include D13 and G40. IMP is bound by residues 13 to 16 (DEGK), 38 to 41 (NAGH), T129, R143, Q224, T239, and R303. H41 functions as the Proton donor in the catalytic mechanism. 299 to 305 (TVSNRQR) contributes to the substrate binding site. Residues R305, 331–333 (KLD), and 413–415 (STG) contribute to the GTP site.

The protein belongs to the adenylosuccinate synthetase family. In terms of assembly, homodimer. It depends on Mg(2+) as a cofactor.

It localises to the cytoplasm. It carries out the reaction IMP + L-aspartate + GTP = N(6)-(1,2-dicarboxyethyl)-AMP + GDP + phosphate + 2 H(+). It functions in the pathway purine metabolism; AMP biosynthesis via de novo pathway; AMP from IMP: step 1/2. Plays an important role in the de novo pathway of purine nucleotide biosynthesis. Catalyzes the first committed step in the biosynthesis of AMP from IMP. The sequence is that of Adenylosuccinate synthetase from Ehrlichia canis (strain Jake).